The following is a 676-amino-acid chain: UvrABC system protein B (676 aa).

Positions 26-414 constitute a Helicase ATP-binding domain; sequence EGLDAGLAHQ…SAGEIADQVV (389 aa). ATP is bound at residue 39 to 46; that stretch reads GVTGSGKT. Residues 92–115 carry the Beta-hairpin motif; that stretch reads YYDYYQPEAYVPTTDTFIEKDASV. The Helicase C-terminal domain occupies 432 to 598; it reads QVDDLLSEIR…ALKRNIKDIM (167 aa). Residues 636-671 enclose the UVR domain; that stretch reads EKEISRLEAAMYQHAQDLEFELAAEKRDEIEKLRAQ.

The protein belongs to the UvrB family. In terms of assembly, forms a heterotetramer with UvrA during the search for lesions. Interacts with UvrC in an incision complex.

The protein localises to the cytoplasm. In terms of biological role, the UvrABC repair system catalyzes the recognition and processing of DNA lesions. A damage recognition complex composed of 2 UvrA and 2 UvrB subunits scans DNA for abnormalities. Upon binding of the UvrA(2)B(2) complex to a putative damaged site, the DNA wraps around one UvrB monomer. DNA wrap is dependent on ATP binding by UvrB and probably causes local melting of the DNA helix, facilitating insertion of UvrB beta-hairpin between the DNA strands. Then UvrB probes one DNA strand for the presence of a lesion. If a lesion is found the UvrA subunits dissociate and the UvrB-DNA preincision complex is formed. This complex is subsequently bound by UvrC and the second UvrB is released. If no lesion is found, the DNA wraps around the other UvrB subunit that will check the other stand for damage. In Vibrio parahaemolyticus serotype O3:K6 (strain RIMD 2210633), this protein is UvrABC system protein B.